Consider the following 134-residue polypeptide: Homeobox protein ceh-5 (134 aa).

A DNA-binding region (homeobox) is located at residues 35-94 (PKRPRTVFTDEQLEKLEESFNTSGYLSGSTRAKLAESLGLSDNQVKVWFQNRRTKQKKID).

Its subcellular location is the nucleus. The chain is Homeobox protein ceh-5 (ceh-5) from Caenorhabditis elegans.